The sequence spans 264 residues: Sulfur carrier protein FdhD (264 aa).

Cys-107 acts as the Cysteine persulfide intermediate in catalysis.

This sequence belongs to the FdhD family.

The protein localises to the cytoplasm. In terms of biological role, required for formate dehydrogenase (FDH) activity. Acts as a sulfur carrier protein that transfers sulfur from IscS to the molybdenum cofactor prior to its insertion into FDH. The polypeptide is Sulfur carrier protein FdhD (Staphylococcus haemolyticus (strain JCSC1435)).